A 419-amino-acid chain; its full sequence is Acyl-coenzyme A thioesterase 1 (419 aa).

Active-site charge relay system residues include S232, D324, and H358. S416 is subject to Phosphoserine.

This sequence belongs to the C/M/P thioester hydrolase family. In terms of assembly, monomer. Expressed in liver.

Its subcellular location is the cytoplasm. The protein resides in the cytosol. It carries out the reaction hexadecanoyl-CoA + H2O = hexadecanoate + CoA + H(+). The enzyme catalyses dodecanoyl-CoA + H2O = dodecanoate + CoA + H(+). The catalysed reaction is tetradecanoyl-CoA + H2O = tetradecanoate + CoA + H(+). It catalyses the reaction decanoyl-CoA + H2O = decanoate + CoA + H(+). It carries out the reaction octadecanoyl-CoA + H2O = octadecanoate + CoA + H(+). The enzyme catalyses eicosanoyl-CoA + H2O = eicosanoate + CoA + H(+). The catalysed reaction is (9Z)-octadecenoyl-CoA + H2O = (9Z)-octadecenoate + CoA + H(+). It catalyses the reaction (9Z)-hexadecenoyl-CoA + H2O = (9Z)-hexadecenoate + CoA + H(+). It carries out the reaction (9E)-octadecenoyl-CoA + H2O = (9E)-octadecenoate + CoA + H(+). It functions in the pathway lipid metabolism; fatty acid metabolism. Functionally, catalyzes the hydrolysis of acyl-CoAs into free fatty acids and coenzyme A (CoASH), regulating their respective intracellular levels. More active towards saturated and unsaturated long chain fatty acyl-CoAs (C12-C20). The protein is Acyl-coenzyme A thioesterase 1 (Acot1) of Rattus norvegicus (Rat).